The following is a 147-amino-acid chain: MYPAHLLVLSAVCVSLLGAANIPPYPLNLINFMEMIRYTIPCDKTWGHYADYGCYCGAGGSGTPVDALDRCCYVHDNCYGVAENKHKCNPKTQSCSYKLTKRTIICYGAAGTCGRIVCDCDRTAALCFGDSEYIGAHKNIDTKRHCQ.

A signal peptide spans 1-19; that stretch reads MYPAHLLVLSAVCVSLLGA. Positions 20–27 are excised as a propeptide; the sequence is ANIPPYPL. 6 disulfide bridges follow: Cys54–Cys146, Cys56–Cys72, Cys71–Cys127, Cys78–Cys120, Cys88–Cys113, and Cys106–Cys118. Ca(2+)-binding residues include Tyr55, Gly57, and Gly59. His75 is a catalytic residue. Asp76 contributes to the Ca(2+) binding site. Asp121 is a catalytic residue.

The protein belongs to the phospholipase A2 family. Group I subfamily. D49 sub-subfamily. In terms of assembly, heterodimer; disulfide-linked. The A chains have phospholipase A2 activity and the B chains show homology with the basic protease inhibitors. Ca(2+) is required as a cofactor. As to expression, expressed by the venom gland.

The protein resides in the secreted. The catalysed reaction is a 1,2-diacyl-sn-glycero-3-phosphocholine + H2O = a 1-acyl-sn-glycero-3-phosphocholine + a fatty acid + H(+). In terms of biological role, snake venom phospholipase A2 (PLA2) that inhibits neuromuscular transmission by blocking acetylcholine release from the nerve termini. PLA2 catalyzes the calcium-dependent hydrolysis of the 2-acyl groups in 3-sn-phosphoglycerides. The sequence is that of Basic phospholipase A2 beta-bungarotoxin A2 chain from Bungarus caeruleus (Indian krait).